A 412-amino-acid chain; its full sequence is uncharacterized protein (412 aa).

Zn(2+) is bound at residue His-49. Glu-52 serves as the catalytic Proton acceptor. Residues His-53 and Glu-129 each coordinate Zn(2+).

This sequence belongs to the peptidase M16 family. Zn(2+) is required as a cofactor.

This is an uncharacterized protein from Rickettsia felis (strain ATCC VR-1525 / URRWXCal2) (Rickettsia azadi).